The following is a 906-amino-acid chain: Coatomer subunit beta' (906 aa).

8 WD repeats span residues 13–52 (ARSD…LVKT), 55–94 (VCDL…RVHM), 97–136 (AHSD…SCSQ), 140–180 (GHTH…PNFT), 183–224 (GHEK…CVQT), 227–266 (GHAQ…LEST), 350–388 (SCEI…NKSF), and 390–425 (SAQE…KSFK). K627 is subject to N6-acetyllysine. Residues 746-783 (IRTGRLPEAAFLARTYLPSQVSRVVKLWRENLSKVNQK) form a WD 9 repeat. Residues 837-863 (EEAKGFQPSRSTAQQELDGKPASPTPV) form a disordered region. The residue at position 859 (S859) is a Phosphoserine. Phosphothreonine is present on T861. Residues 866–890 (ASHTANKEEKSLLELEVDLDNLELV) adopt a coiled-coil conformation.

This sequence belongs to the WD repeat COPB2 family. Oligomeric complex that consists of at least the alpha, beta, beta', gamma, delta, epsilon and zeta subunits. Probably interacts with PEX11A. Interacts with SCYL1. Interacts with JAGN1.

It is found in the cytoplasm. The protein localises to the cytosol. It localises to the golgi apparatus membrane. Its subcellular location is the cytoplasmic vesicle. The protein resides in the COPI-coated vesicle membrane. Functionally, the coatomer is a cytosolic protein complex that binds to dilysine motifs and reversibly associates with Golgi non-clathrin-coated vesicles, which further mediate biosynthetic protein transport from the ER, via the Golgi up to the trans Golgi network. Coatomer complex is required for budding from Golgi membranes, and is essential for the retrograde Golgi-to-ER transport of dilysine-tagged proteins. In mammals, the coatomer can only be recruited by membranes associated to ADP-ribosylation factors (ARFs), which are small GTP-binding proteins; the complex also influences the Golgi structural integrity, as well as the processing, activity, and endocytic recycling of LDL receptors. This coatomer complex protein, essential for Golgi budding and vesicular trafficking, is a selective binding protein (RACK) for protein kinase C, epsilon type. It binds to Golgi membranes in a GTP-dependent manner. In Pongo abelii (Sumatran orangutan), this protein is Coatomer subunit beta' (COPB2).